Consider the following 243-residue polypeptide: Carboxy-S-adenosyl-L-methionine synthase (243 aa).

S-adenosyl-L-methionine-binding positions include Tyr-40, 65 to 67 (GCS), 90 to 91 (DN), 118 to 119 (DI), Asn-133, and Arg-200.

The protein belongs to the class I-like SAM-binding methyltransferase superfamily. Cx-SAM synthase family. In terms of assembly, homodimer.

It catalyses the reaction prephenate + S-adenosyl-L-methionine = carboxy-S-adenosyl-L-methionine + 3-phenylpyruvate + H2O. Its function is as follows. Catalyzes the conversion of S-adenosyl-L-methionine (SAM) to carboxy-S-adenosyl-L-methionine (Cx-SAM). The polypeptide is Carboxy-S-adenosyl-L-methionine synthase (Shewanella pealeana (strain ATCC 700345 / ANG-SQ1)).